We begin with the raw amino-acid sequence, 500 residues long: UDP-N-acetylmuramoyl-L-alanyl-D-glutamate--2,6-diaminopimelate ligase (500 aa).

Residue S32 participates in UDP-N-acetyl-alpha-D-muramoyl-L-alanyl-D-glutamate binding. 117 to 123 contacts ATP; the sequence is GTNGKTT. Residues 159 to 160, S186, Q192, and R194 contribute to the UDP-N-acetyl-alpha-D-muramoyl-L-alanyl-D-glutamate site; that span reads TT. N6-carboxylysine is present on K226. Meso-2,6-diaminopimelate is bound by residues R395, 419–422, G470, and E474; that span reads DNPR. The Meso-diaminopimelate recognition motif signature appears at 419–422; it reads DNPR.

It belongs to the MurCDEF family. MurE subfamily. Requires Mg(2+) as cofactor. Carboxylation is probably crucial for Mg(2+) binding and, consequently, for the gamma-phosphate positioning of ATP.

The protein resides in the cytoplasm. The catalysed reaction is UDP-N-acetyl-alpha-D-muramoyl-L-alanyl-D-glutamate + meso-2,6-diaminopimelate + ATP = UDP-N-acetyl-alpha-D-muramoyl-L-alanyl-gamma-D-glutamyl-meso-2,6-diaminopimelate + ADP + phosphate + H(+). The protein operates within cell wall biogenesis; peptidoglycan biosynthesis. In terms of biological role, catalyzes the addition of meso-diaminopimelic acid to the nucleotide precursor UDP-N-acetylmuramoyl-L-alanyl-D-glutamate (UMAG) in the biosynthesis of bacterial cell-wall peptidoglycan. This is UDP-N-acetylmuramoyl-L-alanyl-D-glutamate--2,6-diaminopimelate ligase from Parasynechococcus marenigrum (strain WH8102).